Consider the following 406-residue polypeptide: Peptidase T (406 aa).

H78 is a Zn(2+) binding site. D80 is a catalytic residue. Zn(2+) is bound at residue D139. E173 acts as the Proton acceptor in catalysis. Zn(2+) is bound by residues E174, D196, and H378.

This sequence belongs to the peptidase M20B family. The cofactor is Zn(2+).

It localises to the cytoplasm. It carries out the reaction Release of the N-terminal residue from a tripeptide.. Cleaves the N-terminal amino acid of tripeptides. This chain is Peptidase T, found in Clostridium perfringens (strain SM101 / Type A).